The primary structure comprises 176 residues: NAD(P)H-quinone oxidoreductase subunit 6, chloroplastic (176 aa).

5 consecutive transmembrane segments (helical) span residues 10–30, 33–53, 60–80, 95–115, and 152–172; these read ILML…VLLT, IYSA…YFLL, VAQL…AVMF, IGDG…MTTI, and FYLP…GAIT.

This sequence belongs to the complex I subunit 6 family. In terms of assembly, NDH is composed of at least 16 different subunits, 5 of which are encoded in the nucleus.

It localises to the plastid. It is found in the chloroplast thylakoid membrane. The enzyme catalyses a plastoquinone + NADH + (n+1) H(+)(in) = a plastoquinol + NAD(+) + n H(+)(out). The catalysed reaction is a plastoquinone + NADPH + (n+1) H(+)(in) = a plastoquinol + NADP(+) + n H(+)(out). Functionally, NDH shuttles electrons from NAD(P)H:plastoquinone, via FMN and iron-sulfur (Fe-S) centers, to quinones in the photosynthetic chain and possibly in a chloroplast respiratory chain. The immediate electron acceptor for the enzyme in this species is believed to be plastoquinone. Couples the redox reaction to proton translocation, and thus conserves the redox energy in a proton gradient. This is NAD(P)H-quinone oxidoreductase subunit 6, chloroplastic (ndhG) from Lolium perenne (Perennial ryegrass).